Reading from the N-terminus, the 177-residue chain is NADH-quinone oxidoreductase subunit B (177 aa).

Positions 56, 57, 121, and 151 each coordinate [4Fe-4S] cluster.

It belongs to the complex I 20 kDa subunit family. NDH-1 is composed of 14 different subunits. Subunits NuoB, C, D, E, F, and G constitute the peripheral sector of the complex. [4Fe-4S] cluster is required as a cofactor.

It is found in the cell inner membrane. It carries out the reaction a quinone + NADH + 5 H(+)(in) = a quinol + NAD(+) + 4 H(+)(out). Its function is as follows. NDH-1 shuttles electrons from NADH, via FMN and iron-sulfur (Fe-S) centers, to quinones in the respiratory chain. Couples the redox reaction to proton translocation (for every two electrons transferred, four hydrogen ions are translocated across the cytoplasmic membrane), and thus conserves the redox energy in a proton gradient. The protein is NADH-quinone oxidoreductase subunit B of Dinoroseobacter shibae (strain DSM 16493 / NCIMB 14021 / DFL 12).